We begin with the raw amino-acid sequence, 92 residues long: Co-chaperonin GroES (92 aa).

Belongs to the GroES chaperonin family. As to quaternary structure, heptamer of 7 subunits arranged in a ring. Interacts with the chaperonin GroEL.

It is found in the cytoplasm. In terms of biological role, together with the chaperonin GroEL, plays an essential role in assisting protein folding. The GroEL-GroES system forms a nano-cage that allows encapsulation of the non-native substrate proteins and provides a physical environment optimized to promote and accelerate protein folding. GroES binds to the apical surface of the GroEL ring, thereby capping the opening of the GroEL channel. The sequence is that of Co-chaperonin GroES from Thermotoga maritima (strain ATCC 43589 / DSM 3109 / JCM 10099 / NBRC 100826 / MSB8).